We begin with the raw amino-acid sequence, 326 residues long: Olfactory receptor 8A1 (326 aa).

Topologically, residues 1–45 (MGFLSPMHPCRPPTQRRMAAGNHSTVTEFILKGLTKRADLQLPLF) are extracellular. N-linked (GlcNAc...) asparagine glycosylation occurs at Asn22. Residues 46-66 (LLFLGIYLVTIVGNLGMITLI) form a helical membrane-spanning segment. Over 67-77 (CLNSQLHTPMY) the chain is Cytoplasmic. The chain crosses the membrane as a helical span at residues 78-100 (YFLSNLSLMDLCYSSVITPKMLV). Residues 101 to 116 (NFVSEKNIISYAGCMS) are Extracellular-facing. A disulfide bond links Cys114 and Cys195. Residues 117 to 137 (QLYFFLVFVIAECYMLTVMAY) form a helical membrane-spanning segment. The Cytoplasmic segment spans residues 138-150 (DRYVAICHPLLYN). A helical transmembrane segment spans residues 151-171 (IIMSHHTCLLLVAVVYAIGLI). Topologically, residues 172-222 (GSTIETGLMLKLPYCEHLISHYFCDILPLMKLSCSSTYDVEMTVFFSAGFN) are extracellular. Residues 223–243 (IIVTSLTVLVSYTFILSSILG) form a helical membrane-spanning segment. Residues 244 to 260 (ISTTEGRSKAFSTCSSH) are Cytoplasmic-facing. The helical transmembrane segment at 261–281 (LAAVGMFYGSTAFMYLKPSTI) threads the bilayer. The Extracellular segment spans residues 282 to 287 (SSLTQE). The helical transmembrane segment at 288-308 (NVASVFYTTVIPMLNPLIYSL) threads the bilayer. Residues 309–326 (RNKEVKAAVQKTLRGKLF) lie on the Cytoplasmic side of the membrane.

This sequence belongs to the G-protein coupled receptor 1 family.

The protein resides in the cell membrane. Odorant receptor. In Homo sapiens (Human), this protein is Olfactory receptor 8A1 (OR8A1).